The following is a 285-amino-acid chain: RNA polymerase sigma factor RpoH (285 aa).

Residues 53–122 are sigma-70 factor domain-2; sequence LILSHLRFVA…IHEYVLRNWR (70 aa). The Interaction with polymerase core subunit RpoC signature appears at 77 to 80; it reads DLIQ. The tract at residues 229–281 is sigma-70 factor domain-4; that stretch reads ALEGLDERSQHIIRARWLDDDNKSTLQELADQYGVSAERVRQLEKNAMKKLKM. A DNA-binding region (H-T-H motif) is located at residues 254-273; it reads LQELADQYGVSAERVRQLEK.

It belongs to the sigma-70 factor family. RpoH subfamily. In terms of assembly, interacts with the RNA polymerase core enzyme.

Its subcellular location is the cytoplasm. Functionally, sigma factors are initiation factors that promote the attachment of RNA polymerase to specific initiation sites and are then released. This sigma factor is involved in regulation of expression of heat shock genes. This is RNA polymerase sigma factor RpoH from Serratia marcescens.